A 167-amino-acid chain; its full sequence is Urease accessory protein UreE (167 aa).

Belongs to the UreE family.

Its subcellular location is the cytoplasm. Functionally, involved in urease metallocenter assembly. Binds nickel. Probably functions as a nickel donor during metallocenter assembly. The sequence is that of Urease accessory protein UreE from Pseudomonas paraeruginosa (strain DSM 24068 / PA7) (Pseudomonas aeruginosa (strain PA7)).